The following is a 99-amino-acid chain: Cell division topological specificity factor (99 aa).

This sequence belongs to the MinE family.

Prevents the cell division inhibition by proteins MinC and MinD at internal division sites while permitting inhibition at polar sites. This ensures cell division at the proper site by restricting the formation of a division septum at the midpoint of the long axis of the cell. In Tolumonas auensis (strain DSM 9187 / NBRC 110442 / TA 4), this protein is Cell division topological specificity factor.